Reading from the N-terminus, the 399-residue chain is Secreted RxLR effector protein 36 (399 aa).

The N-terminal stretch at 1-21 is a signal peptide; it reads MRGTIYVAIAILVAASSRSSA. Positions 50–71 match the RxLR-dEER motif; that stretch reads RILRESRGSNDKLAVGAGDEER. N-linked (GlcNAc...) asparagine glycosylation occurs at Asn-75. The segment at 126–145 is disordered; the sequence is IDPTPSNLGGQALHAPPNPD.

This sequence belongs to the RxLR effector family.

The protein resides in the secreted. Its subcellular location is the host nucleus. Secreted effector that completely suppresses the host cell death induced by cell death-inducing proteins. The protein is Secreted RxLR effector protein 36 of Plasmopara viticola (Downy mildew of grapevine).